The following is a 115-amino-acid chain: Phosphoribosyl-ATP pyrophosphatase (115 aa).

This sequence belongs to the PRA-PH family.

The protein resides in the cytoplasm. It catalyses the reaction 1-(5-phospho-beta-D-ribosyl)-ATP + H2O = 1-(5-phospho-beta-D-ribosyl)-5'-AMP + diphosphate + H(+). It functions in the pathway amino-acid biosynthesis; L-histidine biosynthesis; L-histidine from 5-phospho-alpha-D-ribose 1-diphosphate: step 2/9. This is Phosphoribosyl-ATP pyrophosphatase from Saccharophagus degradans (strain 2-40 / ATCC 43961 / DSM 17024).